We begin with the raw amino-acid sequence, 287 residues long: Proteasome assembly chaperone 1 (287 aa).

The disordered stretch occupies residues methionine 1–arginine 32. The span at aspartate 17–arginine 32 shows a compositional bias: acidic residues.

It belongs to the PSMG1 family. Forms a heterodimer with psmg2. Degraded by the proteasome upon completion of 20S proteasome maturation.

The protein resides in the cytoplasm. The protein localises to the endoplasmic reticulum. Functionally, chaperone protein which promotes assembly of the 20S proteasome as part of a heterodimer with psmg2. This Xenopus tropicalis (Western clawed frog) protein is Proteasome assembly chaperone 1.